A 280-amino-acid polypeptide reads, in one-letter code: Urease accessory protein UreD (280 aa).

The protein belongs to the UreD family. In terms of assembly, ureD, UreF and UreG form a complex that acts as a GTP-hydrolysis-dependent molecular chaperone, activating the urease apoprotein by helping to assemble the nickel containing metallocenter of UreC. The UreE protein probably delivers the nickel.

It localises to the cytoplasm. Functionally, required for maturation of urease via the functional incorporation of the urease nickel metallocenter. This is Urease accessory protein UreD from Pseudomonas aeruginosa (strain ATCC 15692 / DSM 22644 / CIP 104116 / JCM 14847 / LMG 12228 / 1C / PRS 101 / PAO1).